Consider the following 119-residue polypeptide: Large ribosomal subunit protein bL20 (119 aa).

The protein belongs to the bacterial ribosomal protein bL20 family.

In terms of biological role, binds directly to 23S ribosomal RNA and is necessary for the in vitro assembly process of the 50S ribosomal subunit. It is not involved in the protein synthesizing functions of that subunit. The protein is Large ribosomal subunit protein bL20 of Azoarcus sp. (strain BH72).